Reading from the N-terminus, the 302-residue chain is UDP-N-acetylenolpyruvoylglucosamine reductase (302 aa).

The FAD-binding PCMH-type domain maps to 23-188; that stretch reads KVGGNAEIFF…LKAVFKVNKG (166 aa). Arginine 168 is an active-site residue. Serine 217 functions as the Proton donor in the catalytic mechanism. Residue glutamate 287 is part of the active site.

This sequence belongs to the MurB family. Requires FAD as cofactor.

Its subcellular location is the cytoplasm. It catalyses the reaction UDP-N-acetyl-alpha-D-muramate + NADP(+) = UDP-N-acetyl-3-O-(1-carboxyvinyl)-alpha-D-glucosamine + NADPH + H(+). It participates in cell wall biogenesis; peptidoglycan biosynthesis. Its function is as follows. Cell wall formation. The chain is UDP-N-acetylenolpyruvoylglucosamine reductase from Rickettsia bellii (strain RML369-C).